We begin with the raw amino-acid sequence, 1523 residues long: Rho GTPase-activating protein gacHH (1523 aa).

Kelch repeat units lie at residues 30 to 76 (DIVI…YGHS), 83 to 133 (KMFV…LIYD), and 135 to 184 (YILI…DISP). Polar residues-rich tracts occupy residues 161-173 (NSWT…SSTG) and 184-194 (PRSSTTTPTHQ). Residues 161 to 256 (NSWTKPSSNS…GGSPMTTPPT (96 aa)) are disordered. Low complexity predominate over residues 195–211 (SVNGSNSNSSSSSRVRS). Residues 212 to 221 (ATISSHNNSP) are compositionally biased toward polar residues. Residues 227–244 (NNNNNNNNNSNNSNNSNN) are compositionally biased toward low complexity. Kelch repeat units lie at residues 335–384 (KAFI…AIGS), 386–441 (LFIF…PISS), and 443–496 (ILII…PITS). Disordered regions lie at residues 510–569 (LPHL…DNIN), 609–631 (QSID…VSND), and 647–671 (NKNN…NSGS). The span at 615-626 (GGSGGGSGGGNG) shows a compositional bias: gly residues. Residues 690 to 729 (CIKKYNSLKDSYLELKQKYQEEREKRLELEKELERYRLSS) are a coiled coil. Positions 748 to 786 (NINSNNSTTTTTTTTTTTTTPIPLSTSNNNNNNNNNSTL) are disordered. A coiled-coil region spans residues 812 to 840 (YEKRVKWKENTEKEANQQLEVIKSKIDLF). Disordered stretches follow at residues 861-881 (SENI…QNPQ), 905-927 (LTPR…PIPL), 963-991 (TPQK…SKST), 1006-1096 (SGHF…RLGK), and 1143-1194 (NGAN…SERI). Over residues 870-881 (QQQQQQQQQNPQ) the composition is skewed to low complexity. Positions 905–915 (LTPRKSRENSV) are enriched in basic and acidic residues. Composition is skewed to low complexity over residues 971–981 (PQQQQQQQPPQ), 1012–1030 (SSSN…FSNN), 1043–1079 (QHQQ…LQTQ), and 1143–1153 (NGANNLGGLVL). Residues 1151–1228 (LVLTSDKEKE…KKHKKIKGLF (78 aa)) are a coiled coil. Basic and acidic residues predominate over residues 1155 to 1194 (SDKEKEKLEKEREKSERIEREKQEKEREKLEKEREKSERI). Positions 1233–1411 (SNKESLPFRR…TFIEDFHYIF (179 aa)) constitute a Rho-GAP domain. The interval 1425-1482 (DDDYDSSSFGSNNTPSSHSPHSSSPTLNPAVTTTTTTTTTTNTTTTTNTTTTPTSATI) is disordered. Over residues 1430-1476 (SSSFGSNNTPSSHSPHSSSPTLNPAVTTTTTTTTTTNTTTTTNTTTT) the composition is skewed to low complexity.

It localises to the cytoplasm. Rho GTPase-activating protein involved in the signal transduction pathway. In Dictyostelium discoideum (Social amoeba), this protein is Rho GTPase-activating protein gacHH (gacHH).